The chain runs to 292 residues: Rhodanese-like domain-containing protein 11, chloroplastic (292 aa).

The transit peptide at 1 to 56 directs the protein to the chloroplast; that stretch reads MESLSLPVLNPLLASGSNLFRNQHSRMTSSMVSSLKSPIGGTSLSTVRRFGVGVVR. One can recognise a Rhodanese domain in the interval 101 to 224; sequence SLSNKPLLDV…AQDEDLVTEG (124 aa). Cys-184 acts as the Cysteine persulfide intermediate in catalysis.

The protein resides in the plastid. It localises to the chloroplast. The polypeptide is Rhodanese-like domain-containing protein 11, chloroplastic (STR11) (Arabidopsis thaliana (Mouse-ear cress)).